The primary structure comprises 307 residues: Manganese-dependent inorganic pyrophosphatase (307 aa).

The Mn(2+) site is built by His-7, Asp-11, Asp-13, Asp-66, His-88, and Asp-147.

The cofactor is Mn(2+).

Its subcellular location is the cytoplasm. It catalyses the reaction diphosphate + H2O = 2 phosphate + H(+). This is Manganese-dependent inorganic pyrophosphatase (ppaC) from Methanocaldococcus jannaschii (strain ATCC 43067 / DSM 2661 / JAL-1 / JCM 10045 / NBRC 100440) (Methanococcus jannaschii).